The sequence spans 148 residues: Large ribosomal subunit protein bL9 (148 aa).

This sequence belongs to the bacterial ribosomal protein bL9 family.

In terms of biological role, binds to the 23S rRNA. The chain is Large ribosomal subunit protein bL9 from Pseudomonas fluorescens (strain ATCC BAA-477 / NRRL B-23932 / Pf-5).